Reading from the N-terminus, the 120-residue chain is MARVKRGVTKHQRHKKVLKLAKGFRGAKSKLYRPANEQVMKSLAYAYAHRRDKKGDFRKLWIARINAAARLNGLSYSRMMNGLKIAGVSVNRKMLADLAINDAAAFTELVNVAKAQVSAK.

This sequence belongs to the bacterial ribosomal protein bL20 family.

In terms of biological role, binds directly to 23S ribosomal RNA and is necessary for the in vitro assembly process of the 50S ribosomal subunit. It is not involved in the protein synthesizing functions of that subunit. The polypeptide is Large ribosomal subunit protein bL20 (Desulfitobacterium hafniense (strain DSM 10664 / DCB-2)).